We begin with the raw amino-acid sequence, 372 residues long: Queuine tRNA-ribosyltransferase (372 aa).

Residue Asp-92 is the Proton acceptor of the active site. Substrate contacts are provided by residues 92 to 96, Asp-146, Gln-188, and Gly-215; that span reads DSGGF. Residues 246–252 form an RNA binding region; that stretch reads GIGTLRE. The Nucleophile role is filled by Asp-265. Residues 270–274 are RNA binding; important for wobble base 34 recognition; it reads TRLGR. Residues Cys-303, Cys-305, Cys-308, and His-334 each coordinate Zn(2+).

The protein belongs to the queuine tRNA-ribosyltransferase family. In terms of assembly, homodimer. Within each dimer, one monomer is responsible for RNA recognition and catalysis, while the other monomer binds to the replacement base PreQ1. Zn(2+) is required as a cofactor.

The enzyme catalyses 7-aminomethyl-7-carbaguanine + guanosine(34) in tRNA = 7-aminomethyl-7-carbaguanosine(34) in tRNA + guanine. It functions in the pathway tRNA modification; tRNA-queuosine biosynthesis. In terms of biological role, catalyzes the base-exchange of a guanine (G) residue with the queuine precursor 7-aminomethyl-7-deazaguanine (PreQ1) at position 34 (anticodon wobble position) in tRNAs with GU(N) anticodons (tRNA-Asp, -Asn, -His and -Tyr). Catalysis occurs through a double-displacement mechanism. The nucleophile active site attacks the C1' of nucleotide 34 to detach the guanine base from the RNA, forming a covalent enzyme-RNA intermediate. The proton acceptor active site deprotonates the incoming PreQ1, allowing a nucleophilic attack on the C1' of the ribose to form the product. After dissociation, two additional enzymatic reactions on the tRNA convert PreQ1 to queuine (Q), resulting in the hypermodified nucleoside queuosine (7-(((4,5-cis-dihydroxy-2-cyclopenten-1-yl)amino)methyl)-7-deazaguanosine). The chain is Queuine tRNA-ribosyltransferase from Prochlorococcus marinus (strain MIT 9313).